A 384-amino-acid chain; its full sequence is S-adenosylmethionine synthase (384 aa).

His-15 contacts ATP. Mg(2+) is bound at residue Asp-17. Residue Glu-43 participates in K(+) binding. L-methionine is bound by residues Glu-56 and Gln-99. The segment at 99–109 is flexible loop; the sequence is QSADINQGVDR. ATP contacts are provided by residues 164–166, 230–231, Asp-239, 245–246, Ala-262, and Lys-266; these read DAK, RF, and RK. Asp-239 is an L-methionine binding site. Lys-270 contacts L-methionine.

It belongs to the AdoMet synthase family. Homotetramer; dimer of dimers. The cofactor is Mg(2+). Requires K(+) as cofactor.

It is found in the cytoplasm. It catalyses the reaction L-methionine + ATP + H2O = S-adenosyl-L-methionine + phosphate + diphosphate. It participates in amino-acid biosynthesis; S-adenosyl-L-methionine biosynthesis; S-adenosyl-L-methionine from L-methionine: step 1/1. Its function is as follows. Catalyzes the formation of S-adenosylmethionine (AdoMet) from methionine and ATP. The overall synthetic reaction is composed of two sequential steps, AdoMet formation and the subsequent tripolyphosphate hydrolysis which occurs prior to release of AdoMet from the enzyme. This is S-adenosylmethionine synthase from Haemophilus influenzae (strain PittGG).